We begin with the raw amino-acid sequence, 179 residues long: Large ribosomal subunit protein uL5 (179 aa).

It belongs to the universal ribosomal protein uL5 family. In terms of assembly, part of the 50S ribosomal subunit; part of the 5S rRNA/L5/L18/L25 subcomplex. Contacts the 5S rRNA and the P site tRNA. Forms a bridge to the 30S subunit in the 70S ribosome.

This is one of the proteins that bind and probably mediate the attachment of the 5S RNA into the large ribosomal subunit, where it forms part of the central protuberance. In the 70S ribosome it contacts protein S13 of the 30S subunit (bridge B1b), connecting the 2 subunits; this bridge is implicated in subunit movement. Contacts the P site tRNA; the 5S rRNA and some of its associated proteins might help stabilize positioning of ribosome-bound tRNAs. This is Large ribosomal subunit protein uL5 from Burkholderia mallei (strain ATCC 23344).